The primary structure comprises 181 residues: Endoribonuclease YbeY (181 aa).

Residues H120, H124, and H130 each coordinate Zn(2+). The segment at 157-181 is disordered; that stretch reads AGGKRPAGGADGADGAGEPGPTAAR. Residues 161–174 are compositionally biased toward gly residues; it reads RPAGGADGADGAGE.

It belongs to the endoribonuclease YbeY family. Requires Zn(2+) as cofactor.

The protein resides in the cytoplasm. In terms of biological role, single strand-specific metallo-endoribonuclease involved in late-stage 70S ribosome quality control and in maturation of the 3' terminus of the 16S rRNA. The polypeptide is Endoribonuclease YbeY (Frankia alni (strain DSM 45986 / CECT 9034 / ACN14a)).